Reading from the N-terminus, the 463-residue chain is MQLTHLLAFALSLATSEAAYKGFNYGATKSDGSVKSQSDFESEFSTAKNLVGTSGFTSARLYTMIQGGTTNSPISAIPAAIAENTSLLLGLWASGGGMDNELAALKSAISQYGDSFAKLVVGISVGSEDLYRASSEGEKVNAGIGIGPDDLVSFIKEVRSIISGTALSSVPIGHVDTWTAWTNGSNSAVIDAVDWLGFDGYPYFQSSMSNSISDAKSLFDDSVAKTKAVAKGKEVWITETGWPVSGSTQNLGVASLANAKTYWDEVGCPLFDETNTWWYILQDANPTTPNPSFGVVGSTLSTTPLFDLSCSNSTRPSASASSSAAGSATPVGSAVPSGSAAVNPSSSGIVSSAVPSTTPGFTVGKGFRPSNSSAAAYYSSASASGSAYPKFTKTASGSSATSTTAGSSSDSSSTNSGKSSSESSSTNSGASASSSILATGGASSVSGSVFGALVAVFAFVATL.

A signal peptide spans Met-1–Ala-18. The N-linked (GlcNAc...) asparagine glycan is linked to Asn-84. Glu-128 functions as the Proton donor in the catalytic mechanism. A glycan (N-linked (GlcNAc...) asparagine) is linked at Asn-183. Glu-239 functions as the Nucleophile in the catalytic mechanism. Asn-312 carries an N-linked (GlcNAc...) asparagine glycan. Disordered stretches follow at residues Ser-317–Val-354 and Ser-396–Ala-430. Gly-440 carries the GPI-anchor amidated glycine lipid modification. A propeptide spans Gly-441–Leu-463 (removed in mature form).

Belongs to the glycosyl hydrolase 17 family. Post-translationally, the GPI-anchor is attached to the protein in the endoplasmic reticulum and serves to target the protein to the cell surface. There, the glucosamine-inositol phospholipid moiety is cleaved off and the GPI-modified mannoprotein is covalently attached via its lipidless GPI glycan remnant to the 1,6-beta-glucan of the outer cell wall layer.

The protein localises to the cell membrane. It is found in the secreted. It localises to the cell wall. The catalysed reaction is Hydrolysis of (1-&gt;3)-beta-D-glucosidic linkages in (1-&gt;3)-beta-D-glucans.. Glucanases play a role in cell expansion during growth, in cell-cell fusion during mating, and in spore release during sporulation. This enzyme may be involved in beta-glucan degradation and also function biosynthetically as a transglycosylase. The chain is Probable glucan endo-1,3-beta-glucosidase eglC (eglC) from Aspergillus oryzae (strain ATCC 42149 / RIB 40) (Yellow koji mold).